Consider the following 805-residue polypeptide: Putative cation-transporting ATPase MJ1226 (805 aa).

The next 4 membrane-spanning stretches (helical) occupy residues 53–73 (SYFWNPIAWMIEIAAILSAII), 75–95 (HWVDFVIILILLLVNGVVGFW), 226–246 (IGDYLIVLAVILIAIMVAVEL), and 258–278 (FALVLAVSAIPAAMPAVLSIT). The active-site 4-aspartylphosphate intermediate is the Asp311. A run of 6 helical transmembrane segments spans residues 615-637 (YVIYRITETIRILFFVELCILIL), 641-663 (PITALMIVLLAILNDIPILAIAY), 680-700 (ILMLSTALGLSGVVSSFLIFY), 712-734 (ELQSFVFLKLILAGHATIFVTRI), 747-769 (LLFWGVMGTNIIGTIVAAEGIFM), and 773-790 (GWDLALFMWLYAHVWMLI).

Belongs to the cation transport ATPase (P-type) (TC 3.A.3) family. Type IIIA subfamily.

The protein localises to the cell membrane. It carries out the reaction ATP + H2O = ADP + phosphate + H(+). The protein is Putative cation-transporting ATPase MJ1226 of Methanocaldococcus jannaschii (strain ATCC 43067 / DSM 2661 / JAL-1 / JCM 10045 / NBRC 100440) (Methanococcus jannaschii).